Here is a 359-residue protein sequence, read N- to C-terminus: Replication-associated protein (359 aa).

Residues 8-116 form the CRESS-DNA virus Rep endonuclease domain; sequence QINAKHYFLT…DGDVLEWGTF (109 aa). Residues 15 to 18 carry the RCR-1 motif; that stretch reads FLTF. Residues E49, H57, and H59 each coordinate a divalent metal cation. Residues 57–59 carry the RCR-2 motif; the sequence is HLH. The For DNA cleavage activity role is filled by Y103. Residues 103 to 106 carry the RCR-3 motif; the sequence is YIDK. An a divalent metal cation-binding site is contributed by D107. Residues 143-153 are binding to RBR1; sequence KSEALDVIKEL. Residues 156 to 176 are oligomerization; that stretch reads RDYILHFHNINSNLNMVFQVP. ATP is bound at residue 221–228; that stretch reads GDSRTGKT.

It belongs to the geminiviridae Rep protein family. In terms of assembly, homooligomer. Interacts with the replication enhancer protein (REn). Interacts with host retinoblastoma-related protein 1 (RBR1), and may thereby induce the transcription of host replicative enzymes even if the cell is not dividing anymore. Interacts with host PCNA. Interacts with host SCE1 protein. Mg(2+) serves as cofactor. The cofactor is Mn(2+).

It localises to the host nucleus. In terms of biological role, essential for the replication of viral ssDNA. The closed circular ssDNA genome is first converted to a superhelical dsDNA. Rep binds a specific region at the genome origin of replication. It introduces an endonucleolytic nick within the conserved sequence 5'-TAATATTAC-3' in the intergenic region of the genome present in all geminiviruses, thereby initiating the rolling circle replication (RCR). Following cleavage, binds covalently to the 5'-phosphate of DNA as a tyrosyl ester. The cleavage gives rise to a free 3'-OH that serves as a primer for the cellular DNA polymerase. The polymerase synthesizes the (+) strand DNA by rolling circle mechanism. After one round of replication, a Rep-catalyzed nucleotidyl transfer reaction releases a circular single-stranded virus genome, thereby terminating the replication. Displays origin-specific DNA cleavage, nucleotidyl transferase, ATPase and helicase activities. The polypeptide is Replication-associated protein (Solanum lycopersicum (Tomato)).